The sequence spans 374 residues: bZIP transcription factor TRAB1 (374 aa).

A compositionally biased stretch (basic and acidic residues) spans 1–13; the sequence is MDLKDGGGSERRG. 2 disordered regions span residues 1–23 and 117–142; these read MDLK…AGAA and ASPG…QPTL. Residues 14-23 are compositionally biased toward low complexity; it reads AAAGAGAGAA. Residues 286–349 enclose the bZIP domain; that stretch reads VERRQRRMIK…KNFFPEMQKN (64 aa). Positions 288 to 307 are basic motif; sequence RRQRRMIKNRESAARSRARK. A leucine-zipper region spans residues 314-335; it reads LEAEVQKLKEQNMELQKKQEEI.

Belongs to the bZIP family. In terms of assembly, interacts with VP1 (via N-terminus). Expressed in roots, leaves and embryos.

The protein localises to the nucleus. In terms of biological role, transcription activator that mediates abscisic acid (ABA) signaling. Binds specifically to the ABA-responsive element (ABRE) of the EMP1 and RAB16A gene promoters. The chain is bZIP transcription factor TRAB1 from Oryza sativa subsp. japonica (Rice).